A 57-amino-acid polypeptide reads, in one-letter code: UPF0391 membrane protein bsl5717 (57 aa).

2 consecutive transmembrane segments (helical) span residues 6–26 and 35–55; these read WALIFLLVSIVAGVLGFTGIS and FLFYVFVVIFLVLLILGLTIF.

It belongs to the UPF0391 family.

It is found in the cell membrane. The chain is UPF0391 membrane protein bsl5717 from Bradyrhizobium diazoefficiens (strain JCM 10833 / BCRC 13528 / IAM 13628 / NBRC 14792 / USDA 110).